The primary structure comprises 406 residues: Glucose-6-phosphate isomerase (406 aa).

Glutamate 259 (proton donor) is an active-site residue. Catalysis depends on residues histidine 284 and lysine 397.

The protein belongs to the GPI family.

The protein localises to the cytoplasm. It carries out the reaction alpha-D-glucose 6-phosphate = beta-D-fructose 6-phosphate. The protein operates within carbohydrate biosynthesis; gluconeogenesis. It functions in the pathway carbohydrate degradation; glycolysis; D-glyceraldehyde 3-phosphate and glycerone phosphate from D-glucose: step 2/4. Functionally, catalyzes the reversible isomerization of glucose-6-phosphate to fructose-6-phosphate. The polypeptide is Glucose-6-phosphate isomerase (Campylobacter jejuni subsp. jejuni serotype O:2 (strain ATCC 700819 / NCTC 11168)).